Here is a 329-residue protein sequence, read N- to C-terminus: tRNA-modifying protein YgfZ (329 aa).

Folate-binding residues include tryptophan 27 and tryptophan 189.

Belongs to the tRNA-modifying YgfZ family.

The protein resides in the cytoplasm. In terms of biological role, folate-binding protein involved in regulating the level of ATP-DnaA and in the modification of some tRNAs. It is probably a key factor in regulatory networks that act via tRNA modification, such as initiation of chromosomal replication. The chain is tRNA-modifying protein YgfZ from Cronobacter sakazakii (strain ATCC BAA-894) (Enterobacter sakazakii).